The chain runs to 637 residues: Phosphomethylpyrimidine synthase (637 aa).

Substrate contacts are provided by residues asparagine 242, methionine 271, tyrosine 300, histidine 336, 356–358 (SRG), 397–400 (DGLR), and glutamate 436. Position 440 (histidine 440) interacts with Zn(2+). Tyrosine 463 contacts substrate. Zn(2+) is bound at residue histidine 504. Positions 584, 587, and 592 each coordinate [4Fe-4S] cluster.

Belongs to the ThiC family. In terms of assembly, homodimer. Requires [4Fe-4S] cluster as cofactor.

It carries out the reaction 5-amino-1-(5-phospho-beta-D-ribosyl)imidazole + S-adenosyl-L-methionine = 4-amino-2-methyl-5-(phosphooxymethyl)pyrimidine + CO + 5'-deoxyadenosine + formate + L-methionine + 3 H(+). It participates in cofactor biosynthesis; thiamine diphosphate biosynthesis. In terms of biological role, catalyzes the synthesis of the hydroxymethylpyrimidine phosphate (HMP-P) moiety of thiamine from aminoimidazole ribotide (AIR) in a radical S-adenosyl-L-methionine (SAM)-dependent reaction. This is Phosphomethylpyrimidine synthase from Herminiimonas arsenicoxydans.